A 122-amino-acid polypeptide reads, in one-letter code: Large ribosomal subunit protein bL19 (122 aa).

This sequence belongs to the bacterial ribosomal protein bL19 family.

Its function is as follows. This protein is located at the 30S-50S ribosomal subunit interface and may play a role in the structure and function of the aminoacyl-tRNA binding site. This Acinetobacter baumannii (strain AB307-0294) protein is Large ribosomal subunit protein bL19.